Here is a 739-residue protein sequence, read N- to C-terminus: Phosphoribosylformylglycinamidine synthase subunit PurL (739 aa).

The active site involves His-54. Residues Tyr-57 and Lys-96 each coordinate ATP. Glu-98 contacts Mg(2+). Residues 99–102 (SHNH) and Arg-121 each bind substrate. His-100 (proton acceptor) is an active-site residue. Residue Asp-122 coordinates Mg(2+). Residue Gln-245 coordinates substrate. A Mg(2+)-binding site is contributed by Asp-273. 317–319 (ESQ) contacts substrate. ATP is bound by residues Asp-500 and Gly-537. Asn-538 serves as a coordination point for Mg(2+). Residue Ser-540 coordinates substrate.

The protein belongs to the FGAMS family. As to quaternary structure, monomer. Part of the FGAM synthase complex composed of 1 PurL, 1 PurQ and 2 PurS subunits.

The protein resides in the cytoplasm. It catalyses the reaction N(2)-formyl-N(1)-(5-phospho-beta-D-ribosyl)glycinamide + L-glutamine + ATP + H2O = 2-formamido-N(1)-(5-O-phospho-beta-D-ribosyl)acetamidine + L-glutamate + ADP + phosphate + H(+). It functions in the pathway purine metabolism; IMP biosynthesis via de novo pathway; 5-amino-1-(5-phospho-D-ribosyl)imidazole from N(2)-formyl-N(1)-(5-phospho-D-ribosyl)glycinamide: step 1/2. Part of the phosphoribosylformylglycinamidine synthase complex involved in the purines biosynthetic pathway. Catalyzes the ATP-dependent conversion of formylglycinamide ribonucleotide (FGAR) and glutamine to yield formylglycinamidine ribonucleotide (FGAM) and glutamate. The FGAM synthase complex is composed of three subunits. PurQ produces an ammonia molecule by converting glutamine to glutamate. PurL transfers the ammonia molecule to FGAR to form FGAM in an ATP-dependent manner. PurS interacts with PurQ and PurL and is thought to assist in the transfer of the ammonia molecule from PurQ to PurL. In Bacillus cereus (strain B4264), this protein is Phosphoribosylformylglycinamidine synthase subunit PurL.